Consider the following 323-residue polypeptide: MYIVTGGAGFIGSAMVWKLNEMGIEDIVVVDNLSTSEKWKNLVNRRYVDYVHRDTFMDMVLHGDLPWDVDAVVHMGACSATTERDADFLMENNLRYSRMLCELCMETGARFINASSAATYGDGSLGFSDDDATMLRLKPLNMYGYSKQLFDLWAYREGRLDGIASLKFFNVYGPNEYHKGDMRSVICKAYAQIGQEGVMRLFRSCHPDYADGGQMRDFIYVKDCVEVMWWLLQNPGVNGVFNVGTGKARTWNDLVTAVFRAMDREPVIEYIDMPEQLRGKYQSFTEATMDKLRDAGCPVRFTELEDGVTEYVRQYLAAADPFL.

NADP(+) contacts are provided by residues 10-11 (FI), 31-32 (DN), lysine 38, arginine 53, 75-79 (MGACS), and asparagine 92. Tyrosine 143 (proton acceptor) is an active-site residue. Lysine 147 lines the NADP(+) pocket. Asparagine 170 lines the substrate pocket. Valine 171 and lysine 179 together coordinate NADP(+). The active-site Proton acceptor is lysine 179. Residues aspartate 181, lysine 188, 202–205 (FRSC), arginine 216, and tyrosine 281 contribute to the substrate site.

This sequence belongs to the NAD(P)-dependent epimerase/dehydratase family. HldD subfamily. As to quaternary structure, homopentamer. Requires NADP(+) as cofactor.

It catalyses the reaction ADP-D-glycero-beta-D-manno-heptose = ADP-L-glycero-beta-D-manno-heptose. The protein operates within nucleotide-sugar biosynthesis; ADP-L-glycero-beta-D-manno-heptose biosynthesis; ADP-L-glycero-beta-D-manno-heptose from D-glycero-beta-D-manno-heptose 7-phosphate: step 4/4. Functionally, catalyzes the interconversion between ADP-D-glycero-beta-D-manno-heptose and ADP-L-glycero-beta-D-manno-heptose via an epimerization at carbon 6 of the heptose. In Nitratidesulfovibrio vulgaris (strain DP4) (Desulfovibrio vulgaris), this protein is ADP-L-glycero-D-manno-heptose-6-epimerase.